The chain runs to 633 residues: Histone-lysine N-methyltransferase Su(var)3-9 (633 aa).

The region spanning 213-271 is the Chromo domain; the sequence is YIVEKIESVEVVQFQPVFFVKWLGYDVSANTWESYVNLSDCAEMEKFVERHLQLHQHYI. A Pre-SET domain is found at 407 to 472; the sequence is VGCMCRHQSG…SCTNRVVQNG (66 aa). Zn(2+) is bound by residues Cys409, Cys411, Cys419, Cys425, Cys426, Cys454, Cys458, Cys460, and Cys464. The 127-residue stretch at 475 to 601 folds into the SET domain; sequence HPLVLFKTSN…AGEELSFDYI (127 aa). S-adenosyl-L-methionine-binding positions include 486–488, Tyr529, and 558–559; these read SGW and NH. Cys561, Cys621, Cys623, and Cys628 together coordinate Zn(2+). The Post-SET domain occupies 617–633; sequence ARVQCRCGAANCRKVLF.

This sequence belongs to the class V-like SAM-binding methyltransferase superfamily. Histone-lysine methyltransferase family. Suvar3-9 subfamily. As to quaternary structure, interacts with Su(var)205 and Su(var)3-7. Probably associates with HDAC1/Rpd3.

It is found in the nucleus. Its subcellular location is the chromosome. The protein resides in the centromere. The catalysed reaction is L-lysyl(9)-[histone H3] + 3 S-adenosyl-L-methionine = N(6),N(6),N(6)-trimethyl-L-lysyl(9)-[histone H3] + 3 S-adenosyl-L-homocysteine + 3 H(+). Histone methyltransferase that specifically trimethylates 'Lys-9' of histone H3 using monomethylated H3 'Lys-9' as substrate. H3 'Lys-9' trimethylation represents a specific tag for epigenetic transcriptional repression by recruiting Su(var)205/HP1 to methylated histones. Mainly functions in heterochromatin regions, thereby playing a central role in the establishment of constitutive heterochromatin at pericentric regions. Involved in heterochromatic gene silencing including the modification of position-effect-variegation. In Drosophila pseudoobscura pseudoobscura (Fruit fly), this protein is Histone-lysine N-methyltransferase Su(var)3-9 (Su(var)3-9).